The chain runs to 465 residues: MSYIQILPETFSIISSLVLLLLGIVFNRRTINLLALGCTVITLIILILSAKDSGFFPFNSLLKLDLYIRSAQGLILIAGILVLLLLNLSKYDYEYEFSILILFTLFGMITLVSANNLISFYLSFELMSIPLYVLASFNKDSVYSCEAGVKYFTLSALSSCIMLYGMSLLYGYTGLVNFSELSSFLENHQMTYGIVFGLVLILIGLCFKLAIAPFHMWAPDVYQGAPTIVTAFFSTVPKAALVTFLIRFFMGEELVGVEKYFQPVLLYISALSVLISAFGALRQRNLKRLLAYSSIGHIGFILASLSIFTRMGTDSSLIYLVIYIITNIGLFSYFIQIDDDDCSVANLSGIGKKRPVLAFHLSILLFSMAGIPPLAGFFAKLFIFKSLVNSGFIGMSLIFIVASVISCYYYLSIIKAMYFDKPSDSKVIYSKSLFIVTSVASLINIVLFMCVEDLYSLIHLVTKSL.

The next 13 membrane-spanning stretches (helical) occupy residues 6–26 (ILPETFSIISSLVLLLLGIVF), 30–50 (TINLLALGCTVITLIILILSA), 66–86 (LYIRSAQGLILIAGILVLLLL), 98–118 (SILILFTLFGMITLVSANNLI), 156–176 (ALSSCIMLYGMSLLYGYTGLV), 194–214 (IVFGLVLILIGLCFKLAIAPF), 226–246 (PTIVTAFFSTVPKAALVTFLI), 261–281 (FQPVLLYISALSVLISAFGAL), 289–309 (LLAYSSIGHIGFILASLSIFT), 317–337 (LIYLVIYIITNIGLFSYFIQI), 363–383 (ILLFSMAGIPPLAGFFAKLFI), 391–411 (GFIGMSLIFIVASVISCYYYL), and 432–452 (SLFIVTSVASLINIVLFMCVE).

This sequence belongs to the complex I subunit 2 family. In terms of assembly, NDH-1 is composed of 14 different subunits. Subunits NuoA, H, J, K, L, M, N constitute the membrane sector of the complex.

The protein resides in the cell membrane. It carries out the reaction a quinone + NADH + 5 H(+)(in) = a quinol + NAD(+) + 4 H(+)(out). Its function is as follows. NDH-1 shuttles electrons from NADH, via FMN and iron-sulfur (Fe-S) centers, to quinones in the respiratory chain. The immediate electron acceptor for the enzyme in this species is believed to be ubiquinone. Couples the redox reaction to proton translocation (for every two electrons transferred, four hydrogen ions are translocated across the cytoplasmic membrane), and thus conserves the redox energy in a proton gradient. This Wolbachia sp. subsp. Brugia malayi (strain TRS) protein is NADH-quinone oxidoreductase subunit N.